Reading from the N-terminus, the 256-residue chain is Follistatin-related protein 3 (256 aa).

Positions 1 to 23 (MRSGALWPLLWGALVWTVGSVGA) are cleaved as a signal peptide. Residues 34 to 105 (GVCWLQQGRE…SCDGVECGPG (72 aa)) form the TB domain. 8 disulfide bridges follow: Cys36–Cys59, Cys46–Cys90, Cys60–Cys93, Cys97–Cys108, Cys102–Cys117, Cys119–Cys151, Cys123–Cys144, and Cys133–Cys165. The N-linked (GlcNAc...) asparagine glycan is linked to Asn71. The 21-residue stretch at 97–117 (CDGVECGPGKACRMLGGRPHC) folds into the Follistatin-like 1 domain. 2 consecutive Kazal-like domains span residues 111-167 (LGGR…RCQK) and 187-243 (SAHC…ICTG). A Follistatin-like 2 domain is found at 168–191 (SCAQVVCPRPQSCLVDQTGSAHCV). Cystine bridges form between Cys193/Cys227, Cys198/Cys220, and Cys209/Cys241. Asn213 carries an N-linked (GlcNAc...) asparagine glycan.

Interacts with INHBA and INHBB. Interacts with FN1. Interacts with ADAM12. Interacts with MLLT10; the interaction enhances MLLT10 in vitro transcriptional activity and self-association. Interacts with MSTN. As to expression, abundantly expressed in heart, lung, kidney and testis. Continuously expressed in embryonic heart.

It localises to the secreted. The protein localises to the nucleus. The secreted form is a binding and antagonizing protein for members of the TGF-beta family, such as activin, BMP2 and MSTN. Inhibits activin A-, activin B-, BMP2- and MSDT-induced cellular signaling; more effective on activin A than on activin B. Involved in bone formation; inhibits osteoclast differentiation. Involved in hematopoiesis; involved in differentiation of hemopoietic progenitor cells, increases hematopoietic cell adhesion to fibronectin and seems to contribute to the adhesion of hematopoietic precursor cells to the bone marrow stroma. The nuclear form is probably involved in transcriptional regulation via interaction with MLLT10. This is Follistatin-related protein 3 (Fstl3) from Mus musculus (Mouse).